An 82-amino-acid polypeptide reads, in one-letter code: Sulfur carrier protein TusA (82 aa).

The Cysteine persulfide intermediate role is filled by C19.

It belongs to the sulfur carrier protein TusA family.

It localises to the cytoplasm. Sulfur carrier protein which probably makes part of a sulfur-relay system. This is Sulfur carrier protein TusA from Vibrio parahaemolyticus serotype O3:K6 (strain RIMD 2210633).